The chain runs to 1009 residues: Delphilin (1009 aa).

Disordered regions lie at residues 28–82, 170–193, 322–369, 414–635, and 990–1009; these read CRSK…SNTM, EGPV…RSRS, ASPD…SRDT, ELSS…SDNN, and SETQ…PLAW. The segment covering 44 to 53 has biased composition (basic and acidic residues); the sequence is RSQDHHERPQ. In terms of domain architecture, PDZ spans 95-172; it reads TIRVYRGKKS…MPSLVVEEGP (78 aa). The segment covering 322–332 has biased composition (polar residues); the sequence is ASPDSVDSNPY. 2 stretches are compositionally biased toward low complexity: residues 334–352 and 427–439; these read SLDS…SPLP and DDST…SGSD. 3 stretches are compositionally biased toward pro residues: residues 441–455, 462–477, and 484–493; these read IPPP…PPPL, SPLP…PPPA, and IAPPPPPPRP. The span at 521–535 shows a compositional bias: low complexity; the sequence is SSPQPSSQPILQLHQ. Residues 557 to 602 show a composition bias toward polar residues; sequence AQHTRLQHPSQSIYQSQQTTVPRTSPSLTKQKSLHSQPSQQSFEGT. The span at 607–628 shows a compositional bias: pro residues; the sequence is VPPPPPPPLPPPCDPPPLPKPS. The 381-residue stretch at 629–1009 folds into the FH2 domain; it reads PKASDNNHMS…SPRIASPLAW (381 aa).

It is found in the postsynaptic cell membrane. In terms of biological role, postsynaptic scaffolding protein. This chain is Delphilin (grid2ip), found in Danio rerio (Zebrafish).